The sequence spans 624 residues: Double-stranded RNA-binding protein Staufen homolog 2 (624 aa).

5 consecutive DRBM domains span residues 55 to 122, 142 to 228, 254 to 321, 354 to 422, and 540 to 604; these read STSI…NGLA, QRAN…SEIS, MKSF…PEYG, RRRE…IADQ, and LTCL…EKAD. Positions 197–223 are disordered; that stretch reads LRNEPIPERSSLNGEANRGPEEDKDAN. The span at 214-223 shows a compositional bias: basic and acidic residues; sequence RGPEEDKDAN. Disordered regions lie at residues 401-428 and 592-624; these read EKTGKRGENPDWDEQNSGIADQTSTPKG and PFEQAKLRGEKADNKQANSGTIAQDCKDSKAVV. Residues 415 to 426 show a composition bias toward polar residues; the sequence is QNSGIADQTSTP. Basic and acidic residues predominate over residues 596–605; sequence AKLRGEKADN.

Functionally, RNA-binding protein required for the microtubule-dependent transport of RNAs within polarized cell types. This Xenopus tropicalis (Western clawed frog) protein is Double-stranded RNA-binding protein Staufen homolog 2 (stau2).